A 739-amino-acid polypeptide reads, in one-letter code: MKKSTIPSMSALTLAMSLAFGGAAIAQEQVTGNQFWWPEQLNLSPLRQNAVESNPYGSDYHYAEAFKSLDLDAVKKDIKALMTESQDWWPSDYGHYGPFFIRMAWHSAGVYRIFDGRGGAAGGQQRFEPLNSWPDNVNLDKARRLLWPIKQKYGSKISWGDLMVLTGNVALESMGFKTFGFAGGRVDDWEAEQVNWGSEKAWLDSKRRNEKGELAKPMGATQMGLIYVNPEGPNGVPDPLASAKEIRDTFGRMAMNDEETVALIAGGHTFGKAHGAHDPSKCVGADPAASGVEAQGLGWKNKCGKGHSEDTVTSGLEGAWSVNPTAWTMQYLENLYGFDWVQTKSPAGHIQWIPKDGKGANLVPDAHDKSKRHAPIMFTSDIALKEDPSYREITTRFLKNPKEFELAFAKAWFKLTHRDMGPKARYLGADVPAEMLIWQDPIPALDHPVIDNADIKALGNKILASGLTVPELVRTAWASASSFRGTDMRGGANGARIRLEPMMNWQANNPKELAKVLAKLEKVQKDVNSSLKGGKKVSLADVIVLGGSVAVEKAAKEAGVTVSVPFTPGRMDATQAQTDVSSFAVLEPTADGFRNYYSKDSSHSPAEMLIERANMLNLTVPEMTVLVGGLRALDANSAGVKHGVFTDKPGTLSNDFFVNLLDMSTKWSKSEKQEGIYEGQDRKSGKLKWTATPVDLVFGSHSELRAVSEVYGAQDGQDRFVQDFIKAWNKVMNADRFDI.

The signal sequence occupies residues 1–26; that stretch reads MKKSTIPSMSALTLAMSLAFGGAAIA. Residues 105–227 constitute a cross-link (tryptophyl-tyrosyl-methioninium (Trp-Tyr) (with M-253)); the sequence is WHSAGVYRIF…MGATQMGLIY (123 aa). H106 serves as the catalytic Proton acceptor. Residues 227 to 253 constitute a cross-link (tryptophyl-tyrosyl-methioninium (Tyr-Met) (with W-105)); it reads YVNPEGPNGVPDPLASAKEIRDTFGRM. H268 is a binding site for heme b.

It belongs to the peroxidase family. Peroxidase/catalase subfamily. Homodimer or homotetramer. Heme b serves as cofactor. Post-translationally, formation of the three residue Trp-Tyr-Met cross-link is important for the catalase, but not the peroxidase activity of the enzyme.

The enzyme catalyses H2O2 + AH2 = A + 2 H2O. It carries out the reaction 2 H2O2 = O2 + 2 H2O. Bifunctional enzyme with both catalase and broad-spectrum peroxidase activity. The polypeptide is Catalase-peroxidase 2 (Shewanella sp. (strain ANA-3)).